Consider the following 296-residue polypeptide: ATP synthase peripheral stalk subunit OSCP, mitochondrial (296 aa).

The protein belongs to the ATPase delta chain family. In terms of assembly, component of the ATP synthase complex composed at least of ATP5F1A/subunit alpha, ATP5F1B/subunit beta, ATP5MC1/subunit c (homooctomer), MT-ATP6/subunit a, MT-ATP8/subunit 8, ATP5ME/subunit e, ATP5MF/subunit f, ATP5MG/subunit g, ATP5MK/subunit k, ATP5MJ/subunit j, ATP5F1C/subunit gamma, ATP5F1D/subunit delta, ATP5F1E/subunit epsilon, ATP5PF/subunit F6, ATP5PB/subunit b, ATP5PD/subunit d, ATP5PO/subunit OSCP. ATP synthase complex consists of a soluble F(1) head domain (subunits alpha(3) and beta(3)) - the catalytic core - and a membrane F(0) domain - the membrane proton channel (subunits c, a, 8, e, f, g, k and j). These two domains are linked by a central stalk (subunits gamma, delta, and epsilon) rotating inside the F1 region and a stationary peripheral stalk (subunits F6, b, d, and OSCP).

The protein localises to the mitochondrion. Its subcellular location is the mitochondrion inner membrane. In terms of biological role, subunit OSCP, of the mitochondrial membrane ATP synthase complex (F(1)F(0) ATP synthase or Complex V) that produces ATP from ADP in the presence of a proton gradient across the membrane which is generated by electron transport complexes of the respiratory chain. ATP synthase complex consist of a soluble F(1) head domain - the catalytic core - and a membrane F(1) domain - the membrane proton channel. These two domains are linked by a central stalk rotating inside the F(1) region and a stationary peripheral stalk. During catalysis, ATP synthesis in the catalytic domain of F(1) is coupled via a rotary mechanism of the central stalk subunits to proton translocation. In vivo, can only synthesize ATP although its ATP hydrolase activity can be activated artificially in vitro. Part of the complex F(0) domain. Part of the complex F(0) domain and the peripheric stalk, which acts as a stator to hold the catalytic alpha(3)beta(3) subcomplex and subunit a/ATP6 static relative to the rotary elements. The chain is ATP synthase peripheral stalk subunit OSCP, mitochondrial from Dictyostelium discoideum (Social amoeba).